A 446-amino-acid chain; its full sequence is Thymidine phosphorylase (446 aa).

Belongs to the thymidine/pyrimidine-nucleoside phosphorylase family. Homodimer.

The catalysed reaction is thymidine + phosphate = 2-deoxy-alpha-D-ribose 1-phosphate + thymine. The protein operates within pyrimidine metabolism; dTMP biosynthesis via salvage pathway; dTMP from thymine: step 1/2. Its function is as follows. The enzymes which catalyze the reversible phosphorolysis of pyrimidine nucleosides are involved in the degradation of these compounds and in their utilization as carbon and energy sources, or in the rescue of pyrimidine bases for nucleotide synthesis. In Idiomarina loihiensis (strain ATCC BAA-735 / DSM 15497 / L2-TR), this protein is Thymidine phosphorylase.